The primary structure comprises 1843 residues: Xin actin-binding repeat-containing protein 1 (1843 aa).

The span at 1–10 (MADTQTQVAP) shows a compositional bias: polar residues. Positions 1 to 48 (MADTQTQVAPTPTMRMATAEDLPLPPPPALEDLPLPPPKESFSKFHQQ) are disordered. The interval 1-54 (MADTQTQVAPTPTMRMATAEDLPLPPPPALEDLPLPPPKESFSKFHQQRQASEL) is interaction with VASP. Pro residues predominate over residues 23 to 39 (PLPPPPALEDLPLPPPK). Xin repeat units follow at residues 89-104 (GDVQ…WRLD), 121-136 (GDVQ…GSFA), 151-166 (GDVR…KPLD), and 186-201 (GDVQ…RPLD). A disordered region spans residues 132–151 (EGSFANSTDQEPTRPQPGGG). Ser205, Ser208, and Ser213 each carry phosphoserine. 2 Xin repeats span residues 226–241 (GDVK…EPLC) and 264–279 (NAVR…RPLD). Ser295 bears the Phosphoserine mark. A Xin 7 repeat occupies 302–317 (PDVSATRWIFETQPLD). Residue Ser332 is modified to Phosphoserine. 2 Xin repeats span residues 340 to 355 (PDVQ…RALD) and 376 to 391 (GDVR…KPLD). The disordered stretch occupies residues 406 to 432 (DPQDGEGHLSSDSSSALPFSQSAPQRD). A compositionally biased stretch (low complexity) spans 415-429 (SSDSSSALPFSQSAP). Residues 436–451 (GDVKTFKNLFETLPLD) form a Xin 10 repeat. The disordered stretch occupies residues 455 to 479 (QGEVLAHGSPSREEGTDSAGQAQGI). 2 Xin repeats span residues 507–522 (GDVQ…QPLD) and 545–560 (GDVG…QPLE). Residues 531-632 (IDVVRGITRQ…AQSCTWMFKP (102 aa)) form an interaction with CTNNB1 region. Basic and acidic residues predominate over residues 564–577 (QREQQERQKEEGKS). A disordered region spans residues 564–591 (QREQQERQKEEGKSQGDPQPEAPPKGDV). Xin repeat units follow at residues 589–604 (GDVQ…CPMS), 621–636 (AEAQ…QPVD), 654–669 (GERQ…EPLQ), 691–706 (GQVS…LEAG), and 723–738 (GSVH…CPMG). 5 disordered regions span residues 943–999 (SLRW…QAIG), 1063–1205 (AEAQ…MAWG), 1238–1277 (SGPQ…HRAE), 1289–1471 (DPLL…QKEL), and 1561–1696 (MSSL…DVSV). Polar residues-rich tracts occupy residues 1064-1073 (EAQSLHQQVL) and 1080-1089 (PTPTATSNPI). A compositionally biased stretch (polar residues) spans 1294-1311 (SHSSPAGQRTPGGSQTKT). Over residues 1357-1368 (GQREHQRGERDT) the composition is skewed to basic and acidic residues. Residues 1393–1424 (GHSQPSLQHGLSTTAPRPTKNQATGSNAQSSE) show a composition bias toward polar residues. Residues 1462-1490 (DSLQRNQKELQGLLNQVQALEKEAASSVD) adopt a coiled-coil conformation. Polar residues-rich tracts occupy residues 1588–1600 (VTVS…SGSG) and 1663–1679 (SRDS…QSAT). Residues 1685-1843 (TPSFKGNPDV…SCSYSQPAAQ (159 aa)) are interaction with FLNC.

This sequence belongs to the Xin family. Interacts (via N-terminus) with CTTN; the interaction promotes CTTN localization to intercalated disks in cardiomyocytes. Interacts with CTNNB1. Interacts with FLNC and VASP. Interacts with F-actin. In terms of tissue distribution, expressed in skeletal muscle at areas of Z-disk disruption in a longitudinal pattern spanning one or more sarcomeres (at protein level). As to expression, expressed in the heart (at protein level). Expressed in the heart.

The protein resides in the cell junction. Its subcellular location is the adherens junction. The protein localises to the desmosome. In terms of biological role, protects actin filaments from depolymerization. Required for correct cardiac intercalated disk ultrastructure via maintenance of cell-cell adhesion stability, and as a result maintains cardiac organ morphology, conductance and heart beat rhythm. Required for development of normal skeletal muscle morphology and muscle fiber type composition. Plays a role in regulating muscle satellite cell activation and survival, as a result promotes muscle fiber recovery from injury and fatigue. The sequence is that of Xin actin-binding repeat-containing protein 1 from Homo sapiens (Human).